Consider the following 74-residue polypeptide: Ubiquitin-like protein FUBI (74 aa).

This sequence belongs to the ubiquitin family.

The sequence is that of Ubiquitin-like protein FUBI (Fau) from Mus spicilegus (Steppe mouse).